The chain runs to 1117 residues: DNA-directed RNA polymerase subunit beta (1117 aa).

The segment at 1094–1117 (QLARRTPPRPTYESLSRESLDDDE) is disordered. Basic and acidic residues predominate over residues 1108–1117 (LSRESLDDDE).

It belongs to the RNA polymerase beta chain family. As to quaternary structure, in cyanobacteria the RNAP catalytic core is composed of 2 alpha, 1 beta, 1 beta', 1 gamma and 1 omega subunit. When a sigma factor is associated with the core the holoenzyme is formed, which can initiate transcription.

It carries out the reaction RNA(n) + a ribonucleoside 5'-triphosphate = RNA(n+1) + diphosphate. Functionally, DNA-dependent RNA polymerase catalyzes the transcription of DNA into RNA using the four ribonucleoside triphosphates as substrates. The protein is DNA-directed RNA polymerase subunit beta of Trichormus variabilis (strain ATCC 29413 / PCC 7937) (Anabaena variabilis).